Here is a 552-residue protein sequence, read N- to C-terminus: Probable bifunctional methylthioribose-1-phosphate isomerase/methylthioribulose-1-phosphate dehydratase (552 aa).

Positions 1 to 333 are methylthioribose-1-phosphate isomerase activity; the sequence is MRPIDDSSLT…VVTEHGVVHG (333 aa). Substrate-binding positions include 49–51, Arg91, and Gln195; that span reads RGA. Asp236 (proton donor) is an active-site residue. Residue 246-247 coordinates substrate; that stretch reads NK. A methylthioribulose-1-phosphate dehydratase activity region spans residues 334–535; the sequence is TVAAEPGARI…AVCELVLRTG (202 aa). 2 residues coordinate Zn(2+): His427 and His429.

It in the N-terminal section; belongs to the eIF-2B alpha/beta/delta subunits family. MtnA subfamily. This sequence in the C-terminal section; belongs to the aldolase class II family. MtnB subfamily. Requires Zn(2+) as cofactor.

The catalysed reaction is 5-(methylsulfanyl)-alpha-D-ribose 1-phosphate = 5-(methylsulfanyl)-D-ribulose 1-phosphate. It catalyses the reaction 5-(methylsulfanyl)-D-ribulose 1-phosphate = 5-methylsulfanyl-2,3-dioxopentyl phosphate + H2O. It participates in amino-acid biosynthesis; L-methionine biosynthesis via salvage pathway; L-methionine from S-methyl-5-thio-alpha-D-ribose 1-phosphate: step 1/6. The protein operates within amino-acid biosynthesis; L-methionine biosynthesis via salvage pathway; L-methionine from S-methyl-5-thio-alpha-D-ribose 1-phosphate: step 2/6. In terms of biological role, bifunctional protein that catalyzes the interconversion of methylthioribose-1-phosphate (MTR-1-P) into methylthioribulose-1-phosphate (MTRu-1-P), and the dehydration of methylthioribulose-1-phosphate (MTRu-1-P) into 2,3-diketo-5-methylthiopentyl-1-phosphate (DK-MTP-1-P). The chain is Probable bifunctional methylthioribose-1-phosphate isomerase/methylthioribulose-1-phosphate dehydratase (mtnAB) from Nocardia farcinica (strain IFM 10152).